The chain runs to 228 residues: Phosphoglycolate phosphatase (228 aa).

Asp9 functions as the Nucleophile in the catalytic mechanism. Asp9 and Asp11 together coordinate Mg(2+). Position 151 (Lys151) interacts with substrate. Mg(2+) is bound by residues Asp174 and Asp178.

The protein belongs to the archaeal SPP-like hydrolase family. Requires Mg(2+) as cofactor.

It catalyses the reaction 2-phosphoglycolate + H2O = glycolate + phosphate. In terms of biological role, catalyzes the dephosphorylation of 2-phosphoglycolate. This is Phosphoglycolate phosphatase from Pyrobaculum islandicum (strain DSM 4184 / JCM 9189 / GEO3).